The sequence spans 487 residues: L-asparagine permease 2 (487 aa).

12 helical membrane passes run 26-46, 50-70, 98-118, 133-153, 163-183, 214-234, 256-276, 290-310, 341-361, 369-389, 414-434, and 440-460; these read QLQM…GAGG, SAGP…FLIL, VAFV…IVDT, PIPQ…MNLI, FWAS…GTVF, IVLV…VGIA, IACF…YTAY, IGID…ALSS, TGVP…GIIL, AFEI…ATIV, SPFS…LMYF, and PWMI…WYLV.

Belongs to the amino acid-polyamine-organocation (APC) superfamily. Amino acid transporter (AAT) (TC 2.A.3.1) family.

It localises to the cell membrane. Functionally, dual function in both nitrogen assimilation and in protection against acid stress during infection. Involved in asparagine uptake. The protein is L-asparagine permease 2 (ansP2) of Mycobacterium bovis (strain ATCC BAA-935 / AF2122/97).